A 618-amino-acid chain; its full sequence is UvrABC system protein C (618 aa).

The 80-residue stretch at 13-92 (DKPGVYLMKN…IKKYRPKYNI (80 aa)) folds into the GIY-YIG domain. Residues 204-239 (LDIVENFKLNMERAAENLEFEKAAMLRDKINIIEKI) enclose the UVR domain.

It belongs to the UvrC family. Interacts with UvrB in an incision complex.

Its subcellular location is the cytoplasm. The UvrABC repair system catalyzes the recognition and processing of DNA lesions. UvrC both incises the 5' and 3' sides of the lesion. The N-terminal half is responsible for the 3' incision and the C-terminal half is responsible for the 5' incision. The sequence is that of UvrABC system protein C from Clostridium botulinum (strain Langeland / NCTC 10281 / Type F).